Here is a 488-residue protein sequence, read N- to C-terminus: 3-octaprenyl-4-hydroxybenzoate carboxy-lyase (488 aa).

Position 172 (Asn-172) interacts with Mn(2+). Prenylated FMN is bound by residues 175–177, 189–191, and 194–195; these read IYR, RWL, and RG. Residue Glu-238 coordinates Mn(2+). Asp-287 (proton donor) is an active-site residue.

It belongs to the UbiD family. In terms of assembly, homohexamer. Requires prenylated FMN as cofactor. It depends on Mn(2+) as a cofactor.

The protein localises to the cell membrane. The catalysed reaction is a 4-hydroxy-3-(all-trans-polyprenyl)benzoate + H(+) = a 2-(all-trans-polyprenyl)phenol + CO2. It participates in cofactor biosynthesis; ubiquinone biosynthesis. Functionally, catalyzes the decarboxylation of 3-octaprenyl-4-hydroxy benzoate to 2-octaprenylphenol, an intermediate step in ubiquinone biosynthesis. In Alkalilimnicola ehrlichii (strain ATCC BAA-1101 / DSM 17681 / MLHE-1), this protein is 3-octaprenyl-4-hydroxybenzoate carboxy-lyase.